Consider the following 134-residue polypeptide: MKSVFTLSASLAISLLLCCTAQANNHKILGVIAMPRNETNDLALKLPVCRIVKRIQLTADHGDLQLSGAAVYFKAARSASQSLNIPSEIKEGQTTDWININSDNDNKRCVSKITFSGHTVNSSDMATLKIIGDD.

A signal peptide spans 1 to 23 (MKSVFTLSASLAISLLLCCTAQA).

It belongs to the UPF0412 family.

In Escherichia coli O7:K1 (strain IAI39 / ExPEC), this protein is UPF0412 protein YaaI.